The following is a 181-amino-acid chain: Mating-type M-specific polypeptide Mc (181 aa).

Positions 103-171 (TPRPPNAFIL…QHQKMYPGYK (69 aa)) form a DNA-binding region, HMG box.

Its subcellular location is the nucleus. In terms of biological role, mating type proteins are sequence specific DNA-binding proteins that act as master switches in yeast differentiation by controlling gene expression in a cell type-specific fashion. Positive regulator of MFM genes. The HMG box recognizes the DNA sequence 5'-AACAAAG-3'. Required for conjugation and efficient meiosis. The sequence is that of Mating-type M-specific polypeptide Mc (matMc) from Schizosaccharomyces kambucha (Fission yeast).